A 370-amino-acid polypeptide reads, in one-letter code: Quinolinate synthase (370 aa).

Iminosuccinate contacts are provided by H62 and S83. C128 contributes to the [4Fe-4S] cluster binding site. Iminosuccinate-binding positions include 154-156 and S171; that span reads YAN. C215 provides a ligand contact to [4Fe-4S] cluster. Iminosuccinate contacts are provided by residues 241-243 and T258; that span reads HPE. C312 serves as a coordination point for [4Fe-4S] cluster.

Belongs to the quinolinate synthase family. Type 1 subfamily. [4Fe-4S] cluster serves as cofactor.

The protein resides in the cytoplasm. It carries out the reaction iminosuccinate + dihydroxyacetone phosphate = quinolinate + phosphate + 2 H2O + H(+). It participates in cofactor biosynthesis; NAD(+) biosynthesis; quinolinate from iminoaspartate: step 1/1. Catalyzes the condensation of iminoaspartate with dihydroxyacetone phosphate to form quinolinate. This chain is Quinolinate synthase, found in Neisseria meningitidis serogroup A / serotype 4A (strain DSM 15465 / Z2491).